Reading from the N-terminus, the 83-residue chain is MSGNTGERPFADIITSIRYWVIHSITIPSLFIAGWLFVSTGLAYDVFGTPRPNEYFTENRQEVPLITDRFNSLEQIESYTKSI.

Residues 21–35 (VIHSITIPSLFIAGW) traverse the membrane as a helical segment. Position 23 (His-23) interacts with heme.

It belongs to the PsbE/PsbF family. As to quaternary structure, heterodimer of an alpha subunit and a beta subunit. PSII is composed of 1 copy each of membrane proteins PsbA, PsbB, PsbC, PsbD, PsbE, PsbF, PsbH, PsbI, PsbJ, PsbK, PsbL, PsbM, PsbT, PsbX, PsbY, PsbZ, Psb30/Ycf12, at least 3 peripheral proteins of the oxygen-evolving complex and a large number of cofactors. It forms dimeric complexes. It depends on heme b as a cofactor.

Its subcellular location is the plastid. It localises to the chloroplast thylakoid membrane. Functionally, this b-type cytochrome is tightly associated with the reaction center of photosystem II (PSII). PSII is a light-driven water:plastoquinone oxidoreductase that uses light energy to abstract electrons from H(2)O, generating O(2) and a proton gradient subsequently used for ATP formation. It consists of a core antenna complex that captures photons, and an electron transfer chain that converts photonic excitation into a charge separation. The protein is Cytochrome b559 subunit alpha of Chara vulgaris (Common stonewort).